The primary structure comprises 150 residues: Protein Smg homolog (150 aa).

Belongs to the Smg family.

The protein is Protein Smg homolog of Methylibium petroleiphilum (strain ATCC BAA-1232 / LMG 22953 / PM1).